A 137-amino-acid chain; its full sequence is Protein FrxA (137 aa).

The protein is Protein FrxA (frxA) of Pyrococcus furiosus (strain ATCC 43587 / DSM 3638 / JCM 8422 / Vc1).